A 102-amino-acid polypeptide reads, in one-letter code: Cell division topological specificity factor (102 aa).

Belongs to the MinE family.

Prevents the cell division inhibition by proteins MinC and MinD at internal division sites while permitting inhibition at polar sites. This ensures cell division at the proper site by restricting the formation of a division septum at the midpoint of the long axis of the cell. The polypeptide is Cell division topological specificity factor (Synechococcus sp. (strain CC9605)).